The primary structure comprises 122 residues: Large ribosomal subunit protein uL14 (122 aa).

Belongs to the universal ribosomal protein uL14 family. As to quaternary structure, part of the 50S ribosomal subunit. Forms a cluster with proteins L3 and L19. In the 70S ribosome, L14 and L19 interact and together make contacts with the 16S rRNA in bridges B5 and B8.

Binds to 23S rRNA. Forms part of two intersubunit bridges in the 70S ribosome. The chain is Large ribosomal subunit protein uL14 from Cereibacter sphaeroides (strain ATCC 17029 / ATH 2.4.9) (Rhodobacter sphaeroides).